The sequence spans 123 residues: Protein Wnt-7a (123 aa).

The O-palmitoleoyl serine; by PORCN moiety is linked to residue Ser1. The disordered linker stretch occupies residues 33-61 (VEPVRASRNKRPTFLKIKKPLSYRKPMDT). Cys89 and Cys104 form a disulfide bridge. Residue Asn90 is glycosylated (N-linked (GlcNAc...) asparagine).

Belongs to the Wnt family. As to quaternary structure, forms a soluble 1:1 complex with AFM; this prevents oligomerization and is required for prolonged biological activity. The complex with AFM may represent the physiological form in body fluids. Interacts with FZD5. Interacts with PORCN. Post-translationally, palmitoleoylation is required for efficient binding to frizzled receptors. Depalmitoleoylation leads to Wnt signaling pathway inhibition.

It is found in the secreted. The protein resides in the extracellular space. It localises to the extracellular matrix. Functionally, ligand for members of the frizzled family of seven transmembrane receptors that functions in the canonical Wnt/beta-catenin signaling pathway. Plays an important role in embryonic development, including dorsal versus ventral patterning during limb development, skeleton development and urogenital tract development. Required for central nervous system (CNS) angiogenesis and blood-brain barrier regulation. This Meleagris gallopavo (Wild turkey) protein is Protein Wnt-7a (WNT7A).